Consider the following 125-residue polypeptide: Ribonuclease P protein component (125 aa).

This sequence belongs to the RnpA family. Consists of a catalytic RNA component (M1 or rnpB) and a protein subunit.

It carries out the reaction Endonucleolytic cleavage of RNA, removing 5'-extranucleotides from tRNA precursor.. Its function is as follows. RNaseP catalyzes the removal of the 5'-leader sequence from pre-tRNA to produce the mature 5'-terminus. It can also cleave other RNA substrates such as 4.5S RNA. The protein component plays an auxiliary but essential role in vivo by binding to the 5'-leader sequence and broadening the substrate specificity of the ribozyme. This is Ribonuclease P protein component from Clostridium botulinum (strain Alaska E43 / Type E3).